The chain runs to 404 residues: Indole-3-acetate O-methyltransferase 1 (404 aa).

S-adenosyl-L-methionine is bound by residues 82–83 (GC), Asn-88, Asp-120, 169–171 (TFY), and 186–188 (TFS). Mg(2+) is bound by residues Asn-208, Val-212, Arg-294, Asp-295, Phe-297, and Asn-298.

It belongs to the methyltransferase superfamily. SABATH family. As to quaternary structure, homodimer. Requires Mg(2+) as cofactor. As to expression, expressed in roots and panicles.

The enzyme catalyses (indol-3-yl)acetate + S-adenosyl-L-methionine = methyl (indol-3-yl)acetate + S-adenosyl-L-homocysteine. In terms of biological role, catalyzes the methylation of the free carboxyl end of the plant hormone indole-3-acetic acid (IAA). Converts IAA to IAA methyl ester (MeIAA). Regulates IAA activities by IAA methylation. Methylation of IAA plays an important role in regulating plant development and auxin homeostasis. MeIAA seems to be an inactive form of IAA. The protein is Indole-3-acetate O-methyltransferase 1 (IAMT1) of Oryza sativa subsp. japonica (Rice).